The primary structure comprises 312 residues: tRNA pseudouridine synthase B (312 aa).

Residue Asp48 is the Nucleophile of the active site.

It belongs to the pseudouridine synthase TruB family. Type 1 subfamily.

It carries out the reaction uridine(55) in tRNA = pseudouridine(55) in tRNA. Functionally, responsible for synthesis of pseudouridine from uracil-55 in the psi GC loop of transfer RNAs. The protein is tRNA pseudouridine synthase B of Haemophilus influenzae (strain ATCC 51907 / DSM 11121 / KW20 / Rd).